A 110-amino-acid polypeptide reads, in one-letter code: uncharacterized protein (110 aa).

The helical transmembrane segment at 18–34 threads the bilayer; that stretch reads MFPLISTFTSIGLGVLM.

It localises to the membrane. This is an uncharacterized protein from Saccharomyces cerevisiae (strain ATCC 204508 / S288c) (Baker's yeast).